The primary structure comprises 243 residues: Phosphate-specific transport system accessory protein PhoU (243 aa).

The protein belongs to the PhoU family. In terms of assembly, homodimer.

The protein resides in the cytoplasm. Part of the phosphate (Pho) regulon, which plays a key role in phosphate homeostasis. Encoded together with proteins of the phosphate-specific transport (Pst) system in the polycistronic pstSCAB-phoU operon. PhoU is essential for the repression of the Pho regulon at high phosphate conditions. In this role, it may bind, possibly as a chaperone, to PhoR, PhoB or a PhoR-PhoB complex to promote dephosphorylation of phospho-PhoB, or inhibit formation of the PhoR-PhoB transitory complex. In Serratia marcescens, this protein is Phosphate-specific transport system accessory protein PhoU.